We begin with the raw amino-acid sequence, 488 residues long: Palmitoleoyl-protein carboxylesterase notum1' (488 aa).

Residues 1–19 (MAGTLCVTLLLLLSTIAVG) form the signal peptide. N-linked (GlcNAc...) asparagine glycosylation is present at N90. Active-site charge relay system residues include S226, D334, and H383.

Belongs to the pectinacetylesterase family. Notum subfamily. As to expression, expressed in the egg and through cleavage to gastrulation stages. Enriched in the animal (prospective ectoderm) and dorsal regions in early gastrula. Shows a dynamic expression during embryogenesis, in particular during neural induction and antero-posterior (AP) patterning.

It localises to the secreted. The catalysed reaction is [Wnt protein]-O-(9Z)-hexadecenoyl-L-serine + H2O = [Wnt protein]-L-serine + (9Z)-hexadecenoate + H(+). Carboxylesterase that acts as a key negative regulator of the Wnt signaling pathway by specifically mediating depalmitoleoylation of WNT proteins. Serine palmitoleoylation of WNT proteins is required for efficient binding to frizzled receptors. Functions in the prospective ectoderm and is required for neural induction. The protein is Palmitoleoyl-protein carboxylesterase notum1' of Xenopus laevis (African clawed frog).